A 74-amino-acid polypeptide reads, in one-letter code: ILQISGERNVEKEDKNDTWHRVERSSGKFMRSFRLPDNAKVDQVKASMENGVLTVTVPKEEIKKPDVKAIEISG.

A disordered region spans residues 1 to 20 (ILQISGERNVEKEDKNDTWH). A sHSP domain is found at 1–74 (ILQISGERNV…PDVKAIEISG (74 aa)). The segment covering 8–20 (RNVEKEDKNDTWH) has biased composition (basic and acidic residues).

Belongs to the small heat shock protein (HSP20) family. Forms oligomeric structures.

The protein resides in the cytoplasm. In Glycine max (Soybean), this protein is Class I heat shock protein (HSP6834-A).